The primary structure comprises 173 residues: Large ribosomal subunit protein uL10 (173 aa).

The protein belongs to the universal ribosomal protein uL10 family. Part of the ribosomal stalk of the 50S ribosomal subunit. The N-terminus interacts with L11 and the large rRNA to form the base of the stalk. The C-terminus forms an elongated spine to which L12 dimers bind in a sequential fashion forming a multimeric L10(L12)X complex.

Its function is as follows. Forms part of the ribosomal stalk, playing a central role in the interaction of the ribosome with GTP-bound translation factors. This is Large ribosomal subunit protein uL10 from Myxococcus xanthus (strain DK1622).